The sequence spans 347 residues: Probable ribonucleotide transport ATP-binding protein mkl (347 aa).

The 237-residue stretch at 16 to 252 (IEVKGLTKSF…DEPVVRQFLN (237 aa)) folds into the ABC transporter domain. 48 to 55 (GPSGTGKS) serves as a coordination point for ATP.

The protein belongs to the ABC transporter superfamily.

In terms of biological role, not known, could be involved in the transport of ribonucleotides. The polypeptide is Probable ribonucleotide transport ATP-binding protein mkl (mkl) (Mycobacterium leprae (strain TN)).